The following is a 459-amino-acid chain: tRNA modification GTPase MnmE (459 aa).

Arginine 23, glutamate 88, and arginine 127 together coordinate (6S)-5-formyl-5,6,7,8-tetrahydrofolate. A TrmE-type G domain is found at 223 to 381 (GLNTVIIGKP…LKDTIENMFA (159 aa)). Asparagine 233 is a binding site for K(+). Residues 233 to 238 (NVGKSS), 252 to 258 (TDIPGTT), and 277 to 280 (DTAG) contribute to the GTP site. A Mg(2+)-binding site is contributed by serine 237. Threonine 252, isoleucine 254, and threonine 257 together coordinate K(+). Residue threonine 258 coordinates Mg(2+). Lysine 459 contributes to the (6S)-5-formyl-5,6,7,8-tetrahydrofolate binding site.

This sequence belongs to the TRAFAC class TrmE-Era-EngA-EngB-Septin-like GTPase superfamily. TrmE GTPase family. In terms of assembly, homodimer. Heterotetramer of two MnmE and two MnmG subunits. Requires K(+) as cofactor.

Its subcellular location is the cytoplasm. In terms of biological role, exhibits a very high intrinsic GTPase hydrolysis rate. Involved in the addition of a carboxymethylaminomethyl (cmnm) group at the wobble position (U34) of certain tRNAs, forming tRNA-cmnm(5)s(2)U34. The protein is tRNA modification GTPase MnmE of Clostridium acetobutylicum (strain ATCC 824 / DSM 792 / JCM 1419 / IAM 19013 / LMG 5710 / NBRC 13948 / NRRL B-527 / VKM B-1787 / 2291 / W).